A 536-amino-acid chain; its full sequence is T-complex protein 1 subunit delta (536 aa).

The interval 1–21 (MAAVAAPMASKPRGSKAESFV) is disordered.

This sequence belongs to the TCP-1 chaperonin family. In terms of assembly, heterooligomeric complex of about 850 to 900 kDa that forms two stacked rings, 12 to 16 nm in diameter.

It localises to the cytoplasm. Its function is as follows. Molecular chaperone; assists the folding of proteins upon ATP hydrolysis. Known to play a role, in vitro, in the folding of actin and tubulin. In Arabidopsis thaliana (Mouse-ear cress), this protein is T-complex protein 1 subunit delta.